The chain runs to 347 residues: Lipoyl synthase (347 aa).

Positions 77, 82, 88, 103, 107, 110, and 317 each coordinate [4Fe-4S] cluster. The 218-residue stretch at 89 to 306 (FADGTATFMI…MDYGKKIGFF (218 aa)) folds into the Radical SAM core domain.

The protein belongs to the radical SAM superfamily. Lipoyl synthase family. The cofactor is [4Fe-4S] cluster.

It is found in the cytoplasm. It catalyses the reaction [[Fe-S] cluster scaffold protein carrying a second [4Fe-4S](2+) cluster] + N(6)-octanoyl-L-lysyl-[protein] + 2 oxidized [2Fe-2S]-[ferredoxin] + 2 S-adenosyl-L-methionine + 4 H(+) = [[Fe-S] cluster scaffold protein] + N(6)-[(R)-dihydrolipoyl]-L-lysyl-[protein] + 4 Fe(3+) + 2 hydrogen sulfide + 2 5'-deoxyadenosine + 2 L-methionine + 2 reduced [2Fe-2S]-[ferredoxin]. It functions in the pathway protein modification; protein lipoylation via endogenous pathway; protein N(6)-(lipoyl)lysine from octanoyl-[acyl-carrier-protein]: step 2/2. In terms of biological role, catalyzes the radical-mediated insertion of two sulfur atoms into the C-6 and C-8 positions of the octanoyl moiety bound to the lipoyl domains of lipoate-dependent enzymes, thereby converting the octanoylated domains into lipoylated derivatives. The polypeptide is Lipoyl synthase (Psychrobacter cryohalolentis (strain ATCC BAA-1226 / DSM 17306 / VKM B-2378 / K5)).